The following is an 868-amino-acid chain: DNA mismatch repair protein MutS (868 aa).

620 to 627 contacts ATP; sequence GPNMGGKS.

This sequence belongs to the DNA mismatch repair MutS family.

Functionally, this protein is involved in the repair of mismatches in DNA. It is possible that it carries out the mismatch recognition step. This protein has a weak ATPase activity. The protein is DNA mismatch repair protein MutS of Xylella fastidiosa (strain Temecula1 / ATCC 700964).